Here is a 102-residue protein sequence, read N- to C-terminus: Acid shock protein (102 aa).

The N-terminal stretch at 1-21 (MKKVLALVVAAAMGLSSAAFA) is a signal peptide. Residues 22–41 (AETATTPAPTATTTKAAPAK) show a composition bias toward low complexity. Residues 22-58 (AETATTPAPTATTTKAAPAKTTHHKKQHKAAPAQKAQ) constitute a propeptide that is removed on maturation. Residues 22–102 (AETATTPAPT…PAKPAAQPAA (81 aa)) are disordered. Residues 80–90 (AAKKHARKHSH) are compositionally biased toward basic residues. The segment covering 91 to 102 (QQPAKPAAQPAA) has biased composition (low complexity).

The protein belongs to the Asr family. In terms of processing, proteolytic processing gives rise to the active protein.

It is found in the periplasm. Required for growth and/or survival at acidic conditions. The protein is Acid shock protein of Escherichia coli O127:H6 (strain E2348/69 / EPEC).